The following is an 875-amino-acid chain: Importin subunit beta-1 (875 aa).

M1 is subject to N-acetylmethionine. HEAT repeat units lie at residues 2 to 31, 33 to 64, 84 to 122, 128 to 159, and 169 to 201; these read ELIT…AAVE, LPTF…IRLL, ANAR…EIPV, LIPQ…ICQD, and SNEI…LNSL. A Phosphoserine modification is found at S12. The Importin N-terminal domain occupies 21 to 100; the sequence is AQKFLERAAV…KNYVLQTLGT (80 aa). The residue at position 210 (K210) is an N6-acetyllysine. HEAT repeat units follow at residues 211–246, 252–301, 313–359, 363–393, 401–437, 448–484, 499–536, 543–591, 599–638, 643–680, 685–723, 731–775, 785–828, and 830–872; these read ESER…IMSL, ETYM…EAAE, YAKG…TCCE, VPHV…GSIL, LKPL…ICEL, LAPL…YEAA, SSSF…EIVK, YPAV…QNVL, ALQI…VEVL, LKYM…CRAL, LPFC…TLAI, LEVV…VQGL, DVML…CTAF, and KDVL…RKLK. An essential for high affinity interaction with RPL23A region spans residues 285–461; sequence VCDEEMDLAI…LQCLIEGLSA (177 aa). The interval 328–341 is IAB-binding; the sequence is TLTKQDENDDDDDW. Positions 333 to 418 are ran-GTP binding; the sequence is DENDDDDDWN…MPTLIELMKD (86 aa). N6-acetyllysine is present on residues K834 and K866.

Belongs to the importin beta family. Importin beta-1 subfamily. In terms of assembly, forms a complex with an importin alpha subunit. Interacts with XPO1. Forms a heterodimer with IPO7. The KPNB1/IPO7 heterodimer interacts with H1 histone. Interacts with SNUPN. Interacts with H2A, H2B, H3 and H4 histones. Component of an import snRNP complex composed of KPNB1, SNUPN, SMN1 and ZNF259. Component of a nuclear export receptor complex composed of KPNB1, Ran, SNUPN and XPO1. Interacts with SRY. Interacts with PRKCI/atypical protein kinase C iota. Interacts with KPNA2. Interacts with KPNA7. Interacts with SNAI1 (via zinc fingers) and SNAI2 (via zinc fingers). Interacts with SLC35G1 and STIM1. Interacts with DCAF8. Interacts with RAN. Interacts with NUMA1 (via C-terminus); this interaction is inhibited by RanGTP. Interacts with ZBED1/hDREF; required for nuclear import of ZBED1/hDREF. Interacts with SRP19. Interacts with RPL23A (via BIB domain), RPS7 and RPL5. Post-translationally, mono-ADP-ribosylated by PARP16.

Its subcellular location is the cytoplasm. It localises to the nucleus envelope. Functionally, functions in nuclear protein import, either in association with an adapter protein, like an importin-alpha subunit, which binds to nuclear localization signals (NLS) in cargo substrates, or by acting as autonomous nuclear transport receptor. Acting autonomously, serves itself as NLS receptor. Docking of the importin/substrate complex to the nuclear pore complex (NPC) is mediated by KPNB1 through binding to nucleoporin FxFG repeats and the complex is subsequently translocated through the pore by an energy requiring, Ran-dependent mechanism. At the nucleoplasmic side of the NPC, Ran binds to importin-beta and the three components separate and importin-alpha and -beta are re-exported from the nucleus to the cytoplasm where GTP hydrolysis releases Ran from importin. The directionality of nuclear import is thought to be conferred by an asymmetric distribution of the GTP- and GDP-bound forms of Ran between the cytoplasm and nucleus. Mediates autonomously the nuclear import of ribosomal proteins RPL23A, RPS7 and RPL5. In association with IPO7, mediates the nuclear import of H1 histone. In vitro, mediates nuclear import of H2A, H2B, H3 and H4 histones. Imports MRTFA, SNAI1 and PRKCI into the nucleus. The sequence is that of Importin subunit beta-1 (Kpnb1) from Rattus norvegicus (Rat).